A 240-amino-acid chain; its full sequence is Putative outer membrane protein RT0057 (240 aa).

The N-terminal stretch at 1–20 (MLKKLCVILFISSITINSHA) is a signal peptide.

Belongs to the OmpW/AlkL family.

It is found in the cell outer membrane. The chain is Putative outer membrane protein RT0057 from Rickettsia typhi (strain ATCC VR-144 / Wilmington).